Reading from the N-terminus, the 316-residue chain is Transaldolase 1 (316 aa).

Residue Lys131 is the Schiff-base intermediate with substrate of the active site.

This sequence belongs to the transaldolase family. Type 1 subfamily. In terms of assembly, homodimer.

The protein resides in the cytoplasm. It carries out the reaction D-sedoheptulose 7-phosphate + D-glyceraldehyde 3-phosphate = D-erythrose 4-phosphate + beta-D-fructose 6-phosphate. It participates in carbohydrate degradation; pentose phosphate pathway; D-glyceraldehyde 3-phosphate and beta-D-fructose 6-phosphate from D-ribose 5-phosphate and D-xylulose 5-phosphate (non-oxidative stage): step 2/3. In terms of biological role, transaldolase is important for the balance of metabolites in the pentose-phosphate pathway. The chain is Transaldolase 1 from Pectobacterium atrosepticum (strain SCRI 1043 / ATCC BAA-672) (Erwinia carotovora subsp. atroseptica).